The chain runs to 406 residues: CinA-like protein (406 aa).

It belongs to the CinA family.

This is CinA-like protein from Pseudothermotoga lettingae (strain ATCC BAA-301 / DSM 14385 / NBRC 107922 / TMO) (Thermotoga lettingae).